Here is a 277-residue protein sequence, read N- to C-terminus: Ribosomal RNA small subunit methyltransferase A (277 aa).

The S-adenosyl-L-methionine site is built by N27, L29, G54, E75, D95, and N118.

This sequence belongs to the class I-like SAM-binding methyltransferase superfamily. rRNA adenine N(6)-methyltransferase family. RsmA subfamily.

It localises to the cytoplasm. The enzyme catalyses adenosine(1518)/adenosine(1519) in 16S rRNA + 4 S-adenosyl-L-methionine = N(6)-dimethyladenosine(1518)/N(6)-dimethyladenosine(1519) in 16S rRNA + 4 S-adenosyl-L-homocysteine + 4 H(+). In terms of biological role, specifically dimethylates two adjacent adenosines (A1518 and A1519) in the loop of a conserved hairpin near the 3'-end of 16S rRNA in the 30S particle. May play a critical role in biogenesis of 30S subunits. The chain is Ribosomal RNA small subunit methyltransferase A from Chlamydia trachomatis serovar L2 (strain ATCC VR-902B / DSM 19102 / 434/Bu).